Reading from the N-terminus, the 408-residue chain is Probable cysteine desulfurase (408 aa).

At K225 the chain carries N6-(pyridoxal phosphate)lysine.

This sequence belongs to the class-V pyridoxal-phosphate-dependent aminotransferase family. Csd subfamily. It depends on pyridoxal 5'-phosphate as a cofactor.

It catalyses the reaction (sulfur carrier)-H + L-cysteine = (sulfur carrier)-SH + L-alanine. Catalyzes the removal of elemental sulfur and selenium atoms from L-cysteine, L-cystine, L-selenocysteine, and L-selenocystine to produce L-alanine. In Mycoplasma pneumoniae (strain ATCC 29342 / M129 / Subtype 1) (Mycoplasmoides pneumoniae), this protein is Probable cysteine desulfurase (csd).